The primary structure comprises 99 residues: DASH complex subunit DAD1 (99 aa).

A disordered region spans residues glycine 69–isoleucine 99. Over residues glutamine 73–asparagine 83 the composition is skewed to basic and acidic residues. Positions aspartate 89–isoleucine 99 are enriched in acidic residues.

It belongs to the DASH complex DAD1 family. In terms of assembly, component of the DASH complex consisting of ASK1, DAD1, DAD2, DAD3, DAD4, DAM1, DUO1, HSK3, SPC19 and SPC34, with a stoichiometry of one copy of each subunit per complex. Multiple DASH complexes oligomerize to form a ring that encircles spindle microtubules and organizes the rod-like NDC80 complexes of the outer kinetochore. DASH complex oligomerization strengthens microtubule attachments. On cytoplasmic microtubules, DASH complexes appear to form patches instead of rings.

Its subcellular location is the chromosome. It localises to the centromere. The protein resides in the kinetochore. It is found in the cytoplasm. The protein localises to the cytoskeleton. Its subcellular location is the spindle. It localises to the nucleus. Its function is as follows. Component of the DASH complex that connects microtubules with kinetochores and couples microtubule depolymerisation to chromosome movement; it is involved in retrieving kinetochores to the spindle poles before their re-orientation on the spindle in early mitosis and allows microtubule depolymerization to pull chromosomes apart and resist detachment during anaphase. Kinetochores, consisting of a centromere-associated inner segment and a microtubule-contacting outer segment, play a crucial role in chromosome segregation by mediating the physical connection between centromeric DNA and microtubules. Kinetochores also serve as an input point for the spindle assembly checkpoint, which delays anaphase until all chromosomes have bioriented on the mitotic spindle. This is DASH complex subunit DAD1 from Candida albicans (strain SC5314 / ATCC MYA-2876) (Yeast).